Consider the following 230-residue polypeptide: uncharacterized protein (230 aa).

Positions 74, 76, and 105 each coordinate a divalent metal cation.

It belongs to the FAH family.

This is an uncharacterized protein from Pyrococcus horikoshii (strain ATCC 700860 / DSM 12428 / JCM 9974 / NBRC 100139 / OT-3).